Here is a 160-residue protein sequence, read N- to C-terminus: Ribosomal RNA large subunit methyltransferase H (160 aa).

S-adenosyl-L-methionine contacts are provided by Leu76 and Gly108.

Belongs to the RNA methyltransferase RlmH family. Homodimer.

It is found in the cytoplasm. The enzyme catalyses pseudouridine(1915) in 23S rRNA + S-adenosyl-L-methionine = N(3)-methylpseudouridine(1915) in 23S rRNA + S-adenosyl-L-homocysteine + H(+). Specifically methylates the pseudouridine at position 1915 (m3Psi1915) in 23S rRNA. This chain is Ribosomal RNA large subunit methyltransferase H, found in Rhodopseudomonas palustris (strain TIE-1).